The sequence spans 510 residues: Peroxidase 2 (510 aa).

The first 19 residues, 1–19, serve as a signal peptide directing secretion; sequence MRLTYLPLFAGIAIQSASA. The propeptide occupies 20-58; it reads LPDFFKSSVLKPRRTNSLLINPDAQPDLPTAQQASTAAA. Catalysis depends on aspartate 228, which acts as the Proton acceptor. Histidine 362 lines the heme pocket.

As to quaternary structure, homodimer. Heme b serves as cofactor.

In terms of biological role, peroxidase capable of degrading beta-carotene. The polypeptide is Peroxidase 2 (Mycetinis scorodonius (Garlic mushroom)).